We begin with the raw amino-acid sequence, 902 residues long: Histone-lysine N-methyltransferase CLF (902 aa).

Over residues Met-1–Ser-14 the composition is skewed to low complexity. Disordered regions lie at residues Met-1 to Ser-33, Ser-73 to Asn-107, and Gly-335 to Glu-522. Basic and acidic residues-rich tracts occupy residues Glu-15–Ser-33 and Gly-78–Pro-95. The span at Thr-337–Leu-357 shows a compositional bias: polar residues. Low complexity predominate over residues Asp-394–Lys-403. Basic residues predominate over residues Gly-404 to Asn-416. The segment covering Ser-438–Ser-449 has biased composition (low complexity). Residues Ala-459–Gly-473 show a composition bias toward polar residues. The SANT domain occupies Thr-531–Lys-581. Residues Arg-638–Asp-737 enclose the CXC domain. Residues Gln-752 to Arg-867 form the SET domain. An S-adenosyl-L-methionine-binding site is contributed by Tyr-866. A compositionally biased stretch (basic and acidic residues) spans Ala-875–Asn-890. Residues Ala-875–Ala-902 are disordered.

This sequence belongs to the class V-like SAM-binding methyltransferase superfamily. Histone-lysine methyltransferase family. EZ subfamily. In terms of assembly, probable component of a PcG complex. In plants, PcG complexes are probably composed of a member of the EZ family (CLF or MEA), FIE, and a member of the VEFS family (FIS2, VRN2 or EMF2). Interacts with FIE. Interacts with RING1A. Binds to ALP1. Interacts with BLI. Binds to ATX1 in the nucleus. Interacts with EOL1. Interacts (via SANT domain) with HXK1 in the nucleus. Strongly expressed throughout the apical meristem, leaf primordia, and leaves of 7-8 day-old seedling. Weakly expressed in the vasculature of hypocotyl. Strongly expressed throughout the young stages 1 and 2 floral meristems that arose on the flanks of the apex. In stage 3 and 4 flowers, it is expressed in the emerging sepal primordia and in the dome of the floral meristem. During stages 6 and 7, it is strongly expressed in developing petal and stamen, and weakly expressed in the sepals. Late in floral development, at stage 12, it is weakly expressed in all floral whorls, and expressed at intermediate level in petals and ovules.

The protein localises to the nucleus. The catalysed reaction is L-lysyl-[histone] + S-adenosyl-L-methionine = N(6)-methyl-L-lysyl-[histone] + S-adenosyl-L-homocysteine + H(+). In terms of biological role, polycomb group (PcG) protein. Catalytic subunit of some PcG multiprotein complex, which methylates 'Lys-27' of histone H3, leading to transcriptional repression of the affected target genes, mainly abscisic acid (ABA) responsive elements. Required to regulate floral development by repressing the AGAMOUS homeotic gene in leaves, inflorescence stems and flowers. Together with ATX1, modulates AG nucleosome methylation statement. Regulates the antero-posterior organization of the endosperm, as well as the division and elongation rates of leaf cells. PcG proteins act by forming multiprotein complexes, which are required to maintain the transcriptionally repressive state of homeotic genes throughout development. PcG proteins are not required to initiate repression, but to maintain it during later stages of development. Forms a nuclear complex with EZA1/SWN and HXK1 to target common glucose-responsive genes and regulate glucose signaling by glucose-mediated gene repression. Affects the recruitment of HXK1 to the target chromatin. This Arabidopsis thaliana (Mouse-ear cress) protein is Histone-lysine N-methyltransferase CLF.